Here is a 155-residue protein sequence, read N- to C-terminus: Small ribosomal subunit protein uS7c (155 aa).

It belongs to the universal ribosomal protein uS7 family. In terms of assembly, part of the 30S ribosomal subunit.

The protein resides in the plastid. Its subcellular location is the chloroplast. One of the primary rRNA binding proteins, it binds directly to 16S rRNA where it nucleates assembly of the head domain of the 30S subunit. In Stewartia pseudocamellia (Japanese stewartia), this protein is Small ribosomal subunit protein uS7c (rps7).